We begin with the raw amino-acid sequence, 822 residues long: MGTKKVKISSVKRAAHLKSKKTPLSKQQQQKQKQKRDQLKSKREQGQNIFSQKARKRDNLAQRKKHNKLASLGLDPLEEDNEDGDDEMLENVADMLDGDDLALLQANKRKRKAKTTGENDPDQGQSIGLERAYASDTKKEQDAQKIKLDLLPIKSRDGQIITRTTEVDYIPKPKQKKKNEEEEEDDSEEDGDTEYEDSDDDVVNDVEAATAAPVQKLISTTDLLIARQQEIERQKYRIGIICSGLLEKPEDKMRNFHALYELMDEINPASRQANLMAVRKLAIISVTEIFKDILPEYRVGQVDTKMQTLRKATLDRVTFENALLQQFKKFLQKLEQITAQVNRRGGLRTPQTVKLATVAVQCMCDLLVAHPYFNYVQNIAQLLVYMLNCNYAEMRTAVHQCFRTVFSNDKRLEMTLFIVRRINHLIKTKQNNVHVECITCLMGLKIKNVNLDAEKENELKQKKLESHRQRLLSLSKKERKRRKKLTEVNRELEETRAEENKQAKHQKLTEIIKMVFTIYFRVLKNDPTSRVLSAILEGLAEFAHVINLDFFSDLIDVLNRILEDQDELGYRERLHCVQTIFVILSGQGEVLNIDPIRFYQHFYRNMLAVQAGKNHDDFAIILRTLDEVLVKRRRNMSQQRLMAFMKRLLTGSLHLLHNGTLATLGTIKQTFQLTSVLDNLLDTDTTIGSGRYDPELDDPEYCNAASTALYELALLARHYHPTVRRMAVHIAHGVPATGEGALPTEIGKLTSHELFTQFDSTQMAFNPTIPLPKAGQPKLKRGKHLYIRSDFKQEYGKLLQQGKVSQTKDKQTLQIDFFSALQ.

Disordered regions lie at residues 1 to 86 (MGTK…DGDD), 106 to 142 (ANKRKRKAKTTGENDPDQGQSIGLERAYASDTKKEQD), and 172 to 199 (KPKQKKKNEEEEEDDSEEDGDTEYEDSD). Residues 13 to 23 (RAAHLKSKKTP) are compositionally biased toward basic residues. Positions 35–45 (KRDQLKSKREQ) are enriched in basic and acidic residues. Positions 41–48 (SKREQGQN) match the Nuclear localization signal motif. Residues 76–86 (PLEEDNEDGDD) are compositionally biased toward acidic residues. Polar residues predominate over residues 116–126 (TGENDPDQGQS). Over residues 181–199 (EEEEDDSEEDGDTEYEDSD) the composition is skewed to acidic residues. Phosphoserine is present on S187. Residue T193 is modified to Phosphothreonine. S198 carries the phosphoserine modification. Residues 445-509 (KIKNVNLDAE…NKQAKHQKLT (65 aa)) are a coiled coil.

It belongs to the CBF/MAK21 family.

It localises to the nucleus. The protein resides in the nucleolus. The sequence is that of Nucleolar complex protein 3 from Drosophila melanogaster (Fruit fly).